The primary structure comprises 286 residues: GTP cyclohydrolase 1 type 2 homolog (286 aa).

H66, H67, D103, H254, and E258 together coordinate a divalent metal cation.

This sequence belongs to the GTP cyclohydrolase I type 2/NIF3 family. In terms of assembly, homohexamer.

The protein is GTP cyclohydrolase 1 type 2 homolog of Treponema pallidum (strain Nichols).